Here is a 298-residue protein sequence, read N- to C-terminus: Glutamyl-Q tRNA(Asp) synthetase (298 aa).

Residues Arg-9–Ser-13 and Glu-45 contribute to the L-glutamate site. The 'HIGH' region motif lies at Pro-12–Ser-22. 4 residues coordinate Zn(2+): Cys-101, Cys-103, Tyr-115, and Cys-119. Residues Tyr-172 and Arg-190 each contribute to the L-glutamate site. The 'KMSKS' region signature appears at Lys-228–Gln-232. Residue Lys-231 participates in ATP binding.

Belongs to the class-I aminoacyl-tRNA synthetase family. GluQ subfamily. Requires Zn(2+) as cofactor.

Catalyzes the tRNA-independent activation of glutamate in presence of ATP and the subsequent transfer of glutamate onto a tRNA(Asp). Glutamate is transferred on the 2-amino-5-(4,5-dihydroxy-2-cyclopenten-1-yl) moiety of the queuosine in the wobble position of the QUC anticodon. The sequence is that of Glutamyl-Q tRNA(Asp) synthetase from Salmonella typhimurium (strain LT2 / SGSC1412 / ATCC 700720).